The chain runs to 469 residues: Glutamate--tRNA ligase (469 aa).

Positions 11–21 match the 'HIGH' region motif; sequence PSPTGFIHLGN. Over residues 118-131 the composition is skewed to basic and acidic residues; it reads GEKPRYDGTWRPEP. The disordered stretch occupies residues 118–139; it reads GEKPRYDGTWRPEPGKVLPEPP. Residues 243–247 carry the 'KMSKS' region motif; that stretch reads KMSKR. Lys246 is a binding site for ATP.

Belongs to the class-I aminoacyl-tRNA synthetase family. Glutamate--tRNA ligase type 1 subfamily. As to quaternary structure, monomer.

Its subcellular location is the cytoplasm. It catalyses the reaction tRNA(Glu) + L-glutamate + ATP = L-glutamyl-tRNA(Glu) + AMP + diphosphate. Functionally, catalyzes the attachment of glutamate to tRNA(Glu) in a two-step reaction: glutamate is first activated by ATP to form Glu-AMP and then transferred to the acceptor end of tRNA(Glu). This is Glutamate--tRNA ligase from Burkholderia pseudomallei (strain 668).